The following is a 412-amino-acid chain: MIGTFTYLDPTIQADPNLLFFYFDFDAFFASVEEIENPELKNQPLIVGNRTSRSVVSTCNYLARSYGIKSGMPIAKALELCPQAIFATSHFRNYRKYSAKIFAMIAEQFNLEVHTLSIDEGFVCFRDLSPRKAFSLAKRIQRHVYEQLNFHISIGISNQFTLAKIFSNQAKPFGVKSCFSKEVKRKLWPLPIVELPGIGKRQLDNAFKNNFHKIGDLAKCKDVTLFKRVFGIAWESLHAVALGETYTQSEQDVKSRSIAVSETLEYLNYSSNQLQQKLTSIFNELYARLQLSFQMCKGVVVQLKSNDFIVNSHSQSIKKYTADYQTLLVIVKKLFNRLLMGVGLNIRLIGVSFFGLKNNPSSSRPEGLLFYEYQQAKPKQQTAHFALDQMIYEINQSFGYEIIQRAKKLAAS.

A UmuC domain is found at 20–199 (FFYFDFDAFF…LPIVELPGIG (180 aa)).

It belongs to the DNA polymerase type-Y family.

This is an uncharacterized protein from Mycoplasma pneumoniae (strain ATCC 29342 / M129 / Subtype 1) (Mycoplasmoides pneumoniae).